Consider the following 214-residue polypeptide: Protein FAM167A (214 aa).

Disordered stretches follow at residues 1–26 (MSVP…PDDH) and 59–108 (PFPR…LSTG). Residues 118–156 (EAIAWLRKELTEMRLQDQQLARQLMRLRGDINKLKIEHT) adopt a coiled-coil conformation.

Belongs to the FAM167 (SEC) family. As to expression, expressed in skin, including primary keratinocytes, spleen, kidney, leukocytes, testis, lung, small intestine and prostate.

The sequence is that of Protein FAM167A (FAM167A) from Homo sapiens (Human).